The primary structure comprises 444 residues: Putative zinc metalloprotease XF_1047 (444 aa).

Histidine 22 is a binding site for Zn(2+). Glutamate 23 is a catalytic residue. Zn(2+) is bound at residue histidine 26. A helical membrane pass occupies residues 98–120 (IAIVAAGPLANLLLCMLLLWVLF). A PDZ domain is found at 192–276 (TLELSKLKQP…DGHPGMIEIR (85 aa)). Transmembrane regions (helical) follow at residues 371 to 393 (VGWFIYFLSLLSLSLAIINLFPI) and 418 to 440 (AMAAGQYIGLALLAGLMGLAFYN).

The protein belongs to the peptidase M50B family. Requires Zn(2+) as cofactor.

It localises to the cell inner membrane. The protein is Putative zinc metalloprotease XF_1047 of Xylella fastidiosa (strain 9a5c).